Here is a 561-residue protein sequence, read N- to C-terminus: Potassium-transporting ATPase potassium-binding subunit (561 aa).

Transmembrane regions (helical) follow at residues 4-24, 65-85, 133-153, 177-197, 253-273, 285-305, 380-400, 417-437, 484-504, and 528-548; these read IVMQ…PLGI, AVSV…VLML, IGLT…LFAV, LYIL…QGVV, FTNL…VVMF, AIMT…TISE, GLYG…LLVG, MVCL…AVAV, MVGA…ALYL, and FIGL…LPAL.

The protein belongs to the KdpA family. The system is composed of three essential subunits: KdpA, KdpB and KdpC.

It is found in the cell membrane. In terms of biological role, part of the high-affinity ATP-driven potassium transport (or Kdp) system, which catalyzes the hydrolysis of ATP coupled with the electrogenic transport of potassium into the cytoplasm. This subunit binds the extracellular potassium ions and delivers the ions to the membrane domain of KdpB through an intramembrane tunnel. This chain is Potassium-transporting ATPase potassium-binding subunit, found in Listeria monocytogenes serotype 4b (strain F2365).